A 359-amino-acid polypeptide reads, in one-letter code: Epoxide hydrolase 4 (359 aa).

A helical; Signal-anchor for type II membrane protein transmembrane segment spans residues 15 to 35 (ALLYWSLVYGYCGLCASVHLL). Residues 92-337 (PLMLLLHGFP…ILSEGSHWLQ (246 aa)) enclose the AB hydrolase-1 domain. Residue Asp-167 is the Nucleophile of the active site. Residue Tyr-279 is the Proton donor of the active site. His-334 acts as the Proton acceptor in catalysis.

The protein belongs to the AB hydrolase superfamily. Epoxide hydrolase family.

The protein resides in the membrane. The protein is Epoxide hydrolase 4 (Ephx4) of Mus musculus (Mouse).